We begin with the raw amino-acid sequence, 22 residues long: FDESFGFQGPSTYEKTPLGEPA.

Residues 1–22 (FDESFGFQGPSTYEKTPLGEPA) form a disordered region.

In terms of tissue distribution, hemolymph.

Its subcellular location is the secreted. The protein resides in the extracellular space. Its function is as follows. Inhibits chymotrypsin stoichiometrically. Also inhibits porcine pancreatic elastase and trypsin. The chain is Chymotrypsin inhibitor from Mythimna unipuncta (Armyworm moth).